The chain runs to 68 residues: Large ribosomal subunit protein bL35 (68 aa).

Belongs to the bacterial ribosomal protein bL35 family.

This Aster yellows witches'-broom phytoplasma (strain AYWB) protein is Large ribosomal subunit protein bL35.